The sequence spans 1050 residues: Collagen alpha-2(I) chain (1050 aa).

The interval 1 to 1050 (SGGFDFSFLP…FGYEGDFYRA (1050 aa)) is disordered. A 4-hydroxyproline mark is found at proline 10 and proline 13. Over residues 20-32 (RYYGVGLGPGPMG) the composition is skewed to gly residues. Composition is skewed to low complexity over residues 33–46 (LMGP…SGAP) and 56–77 (EPGE…APGK). 4-hydroxyproline occurs at positions 40 and 46. Residues 78–92 (AGEDGHPGKPGRPGE) are compositionally biased toward basic and acidic residues. Lysine 114 carries the 5-hydroxylysine; alternate modification. An O-linked (Gal...) hydroxylysine; alternate glycan is attached at lysine 114. 5 stretches are compositionally biased toward low complexity: residues 161-190 (VGAP…SAGP), 236-257 (PGAN…AGAP), 298-311 (EPGS…PGSS), 320-338 (NGES…RGNP), and 355-371 (PAGA…RGPS). Residues proline 377 and proline 380 each carry the 4-hydroxyproline modification. 2 stretches are compositionally biased toward low complexity: residues 406–425 (LPGI…RGEA) and 452–467 (AGNR…NGAQ). The segment covering 474 to 483 (GVQGGKGEQG) has biased composition (gly residues). 3 stretches are compositionally biased toward low complexity: residues 530–547 (PGES…SRGP), 598–642 (VGTT…PRGS), and 649–669 (VGPA…QPGA). A compositionally biased stretch (basic and acidic residues) spans 670–679 (KGERGTKGPK). The segment covering 687–697 (PTGPVGSAGPA) has biased composition (low complexity). Residues 707–716 (GSRGDGGPPG) show a composition bias toward gly residues. Over residues 718-727 (TGFPGAAGRT) the composition is skewed to low complexity. Gly residues predominate over residues 764–773 (GETGAGGPPG). Low complexity-rich tracts occupy residues 781–808 (SGEP…LGLP), 816–841 (LPGV…RGPS), 881–903 (YAGN…VGPA), and 911–926 (EPGP…ALGP). Over residues 936–947 (RGDKGEPGDKGP) the composition is skewed to basic and acidic residues. Residues 1020-1032 (SGPPGPPGPPGPP) show a composition bias toward pro residues.

It belongs to the fibrillar collagen family. In terms of assembly, trimers of one alpha 2(I) and two alpha 1(I) chains. Interacts (via C-terminus) with TMEM131 (via PapD-L domain); the interaction is direct and is involved in assembly and TRAPPIII ER-to-Golgi transport complex-dependent secretion of collagen. Prolines at the third position of the tripeptide repeating unit (G-X-Y) are hydroxylated in some or all of the chains. Expressed in bones.

It is found in the secreted. Its subcellular location is the extracellular space. The protein resides in the extracellular matrix. Functionally, type I collagen is a member of group I collagen (fibrillar forming collagen). The chain is Collagen alpha-2(I) chain from Megatherium americanum (Giant ground sloth).